The following is a 609-amino-acid chain: (R)-linalool synthase TPS5, chloroplastic (609 aa).

The N-terminal 42 residues, 1 to 42, are a transit peptide targeting the chloroplast; sequence MVSILSNIGMMVVTFKRPSLFTSLRRRSANNIIITKHSHPIS. (2E)-geranyl diphosphate-binding residues include arginine 325, aspartate 362, aspartate 366, arginine 503, and aspartate 506. Mg(2+)-binding residues include aspartate 362 and aspartate 366. The DDXXD motif signature appears at 362-366; it reads DDIYD. The Mg(2+) site is built by aspartate 506, threonine 510, and glutamate 514.

Belongs to the terpene synthase family. Tpsb subfamily. The cofactor is Mg(2+). Mn(2+) is required as a cofactor. As to expression, highly expressed in young fruits and plant tops. Expressed in flower buds and trichomes of petioles and stems. Expressed at low levels in young leaves, stems, petioles, sepals and petals.

It localises to the plastid. It is found in the chloroplast. The enzyme catalyses (2E)-geranyl diphosphate + H2O = (R)-linalool + diphosphate. It carries out the reaction (2E,6E)-farnesyl diphosphate + H2O = (6E)-nerolidol + diphosphate. It functions in the pathway secondary metabolite biosynthesis; terpenoid biosynthesis. In terms of biological role, involved in monoterpene (C10) biosynthesis in glandular trichomes. Converts geranyl diphosphate to linalool in glandular trichomes in response to jasmonate (JA). Can convert farnesyl diphosphate to nerolidol in vitro. The chain is (R)-linalool synthase TPS5, chloroplastic from Solanum lycopersicum (Tomato).